The primary structure comprises 783 residues: Rho GTPase-activating protein gacR (783 aa).

Positions 138-188 (AKNRFDKARLSFDEASEQFKQLRKKQNNINNEKLLEAEEDLDYATQQFSDI) form a coiled coil. A disordered region spans residues 262-299 (QFEQTNSSRTISLPPPPPPKPTSSTPSSSPSPSPSSSI). Residues 283–299 (TSSTPSSSPSPSPSSSI) show a composition bias toward low complexity. The Rho-GAP domain maps to 319-509 (MALSTITERE…FIISNFNNIF (191 aa)). Gly residues predominate over residues 527-539 (GSSGGGGGGGSSG). A disordered region spans residues 527 to 745 (GSSGGGGGGG…TTNSRPLSNS (219 aa)). 4 stretches are compositionally biased toward low complexity: residues 568–589 (SVNT…ASSA), 599–630 (PSSS…NINP), 641–651 (PKKISSSSNSL), and 661–698 (SIPE…RSST). Residues 706–738 (NRVSMYLQNSNTGVPLPSQKPQRVISNNNTTTN) are compositionally biased toward polar residues.

It localises to the cytoplasm. Rho GTPase-activating protein involved in the signal transduction pathway. The protein is Rho GTPase-activating protein gacR (gacR) of Dictyostelium discoideum (Social amoeba).